The following is a 332-amino-acid chain: Ferredoxin--NADP reductase 2 (332 aa).

Positions 33, 41, 46, 86, 121, 282, and 325 each coordinate FAD.

Belongs to the ferredoxin--NADP reductase type 2 family. In terms of assembly, homodimer. FAD is required as a cofactor.

The catalysed reaction is 2 reduced [2Fe-2S]-[ferredoxin] + NADP(+) + H(+) = 2 oxidized [2Fe-2S]-[ferredoxin] + NADPH. In Sulfolobus acidocaldarius (strain ATCC 33909 / DSM 639 / JCM 8929 / NBRC 15157 / NCIMB 11770), this protein is Ferredoxin--NADP reductase 2.